A 272-amino-acid chain; its full sequence is Auxin-responsive protein IAA5 (272 aa).

Positions 1 to 92 (MSPPLEPHDY…DSSPRHGASS (92 aa)) are disordered. 2 stretches are compositionally biased toward low complexity: residues 14 to 33 (SAAA…SPNP) and 40 to 50 (PRLTLRLGLPG). Residues 44–48 (LRLGL) carry the EAR-like (transcriptional repression) motif. Residues 152–256 (PLYVKVSMDG…RKLKIMRGSD (105 aa)) enclose the PB1 domain.

The protein belongs to the Aux/IAA family. Homodimers and heterodimers. In terms of tissue distribution, highly expressed in roots and flowers. Expressed in shoots.

The protein localises to the nucleus. Aux/IAA proteins are short-lived transcriptional factors that function as repressors of early auxin response genes at low auxin concentrations. The protein is Auxin-responsive protein IAA5 (IAA5) of Oryza sativa subsp. indica (Rice).